The following is a 147-amino-acid chain: Basic phospholipase A2 beta-bungarotoxin A1 chain (147 aa).

Residues M1 to A19 form the signal peptide. A propeptide spanning residues A20 to L27 is cleaved from the precursor. Disulfide bonds link C54-C146, C56-C72, C71-C127, C78-C120, C88-C113, and C106-C118. Ca(2+) contacts are provided by Y55, G57, and G59. H75 is an active-site residue. Position 76 (D76) interacts with Ca(2+). Residue D121 is part of the active site.

It belongs to the phospholipase A2 family. Group I subfamily. D49 sub-subfamily. As to quaternary structure, heterodimer; disulfide-linked. The A chains have phospholipase A2 activity and the B chains show homology with the basic protease inhibitors. Ca(2+) serves as cofactor. As to expression, expressed by the venom gland.

The protein localises to the secreted. The enzyme catalyses a 1,2-diacyl-sn-glycero-3-phosphocholine + H2O = a 1-acyl-sn-glycero-3-phosphocholine + a fatty acid + H(+). Snake venom phospholipase A2 (PLA2) that inhibits neuromuscular transmission by blocking acetylcholine release from the nerve termini. PLA2 catalyzes the calcium-dependent hydrolysis of the 2-acyl groups in 3-sn-phosphoglycerides. This Bungarus caeruleus (Indian krait) protein is Basic phospholipase A2 beta-bungarotoxin A1 chain.